The chain runs to 428 residues: Putative UDP-glucose 6-dehydrogenase YtcA (428 aa).

Positions 1–23 are cleaved as a signal peptide; the sequence is MKICVVGAGYVGLTLSAALASIG. Residues 2-19, V11, D30, K35, T118, and E152 contribute to the NAD(+) site; that span reads KICV…SAAL. Residues 148–152, K203, N207, 248–252, and G256 each bind substrate; these read EFLRE and FLQAG. The active-site Nucleophile is the C259. K262 is a binding site for NAD(+). Position 319 (K319) interacts with substrate. R326 is an NAD(+) binding site.

Belongs to the UDP-glucose/GDP-mannose dehydrogenase family.

It catalyses the reaction UDP-alpha-D-glucose + 2 NAD(+) + H2O = UDP-alpha-D-glucuronate + 2 NADH + 3 H(+). The protein operates within nucleotide-sugar biosynthesis; UDP-alpha-D-glucuronate biosynthesis; UDP-alpha-D-glucuronate from UDP-alpha-D-glucose: step 1/1. Functionally, catalyzes the conversion of UDP-glucose into UDP-glucuronate, one of the precursors of teichuronic acid. The polypeptide is Putative UDP-glucose 6-dehydrogenase YtcA (ytcA) (Bacillus subtilis (strain 168)).